Reading from the N-terminus, the 386-residue chain is Terpene cyclase 6 (386 aa).

Mg(2+) is bound by residues D128, N276, and S280. The D(D/E)XX(D/E) motif signature appears at D128 to D132. The NSE motif signature appears at N276–E284. A WxxxxxRY motif motif is present at residues W360 to Y367. Positions 366 and 367 each coordinate (2E,6E)-farnesyl diphosphate.

The protein belongs to the terpene synthase family. Homodimer. Requires Mg(2+) as cofactor.

It carries out the reaction (2E,6E)-farnesyl diphosphate + H2O = trichobrasilenol + diphosphate. The catalysed reaction is (2E,6E)-farnesyl diphosphate = alpha-humulene + diphosphate. It catalyses the reaction (2E,6E)-farnesyl diphosphate = (-)-(E)-beta-caryophyllene + diphosphate. The enzyme catalyses (2E,6E)-farnesyl diphosphate = (E)-2-epi-beta-caryophyllene + diphosphate. It carries out the reaction (2E,6E)-farnesyl diphosphate + H2O = (+)-isoafricanol + diphosphate. The catalysed reaction is (2E,6E)-farnesyl diphosphate + H2O = (+)-(2S,3R,9R)-pristinol + diphosphate. It catalyses the reaction (2E,6E)-farnesyl diphosphate = african-3-ene + diphosphate. The enzyme catalyses (2E,6E)-farnesyl diphosphate = african-1-ene + diphosphate. It participates in sesquiterpene biosynthesis. Functionally, terpene cyclase that is able to convert FPP into a mixture of sesquiterpene hydrocarbons and alcohols. The main product is trichobrasilenol. Additionally, side products include alpha-humulene, caryophyllene, 2-epi-caryophyllene, african-3-ene, african-1-ene, isoafricanol and pristinol. Does not accept GPP, GGPP, and GFPP as substrates. This Hypocrea atroviridis (Trichoderma atroviride) protein is Terpene cyclase 6.